The chain runs to 441 residues: N-acetylmuramyl-L-alanine amidase (441 aa).

A signal peptide spans 1–25; sequence MKTKTLFIFSAILTLSIFAPNETFA.

This sequence belongs to the peptidase S12 family.

It catalyses the reaction Hydrolyzes the link between N-acetylmuramoyl residues and L-amino acid residues in certain cell-wall glycopeptides.. Its pathway is cell wall biogenesis; peptidoglycan recycling. Involved in muropeptide recycling. Hydrolyzes the amide bond between N-acetylmuramic acid (MurNAc) and the L-alanine residue of the stem peptide. Cannot hydrolyze muropeptides containing N-acetylglucosamine (GlcNAc) at the non-reducing end. In Bacillus subtilis (strain 168), this protein is N-acetylmuramyl-L-alanine amidase.